The primary structure comprises 513 residues: Histidine ammonia-lyase (513 aa).

Positions 144 to 146 (ASG) form a cross-link, 5-imidazolinone (Ala-Gly). At serine 145 the chain carries 2,3-didehydroalanine (Ser).

It belongs to the PAL/histidase family. In terms of processing, contains an active site 4-methylidene-imidazol-5-one (MIO), which is formed autocatalytically by cyclization and dehydration of residues Ala-Ser-Gly.

Its subcellular location is the cytoplasm. The catalysed reaction is L-histidine = trans-urocanate + NH4(+). It functions in the pathway amino-acid degradation; L-histidine degradation into L-glutamate; N-formimidoyl-L-glutamate from L-histidine: step 1/3. The polypeptide is Histidine ammonia-lyase (Streptococcus gordonii (strain Challis / ATCC 35105 / BCRC 15272 / CH1 / DL1 / V288)).